A 166-amino-acid polypeptide reads, in one-letter code: NADPH-dependent 7-cyano-7-deazaguanine reductase (166 aa).

The active-site Thioimide intermediate is the cysteine 57. Aspartate 64 acts as the Proton donor in catalysis. Residues 79–81 (VES) and 98–99 (HE) contribute to the substrate site.

The protein belongs to the GTP cyclohydrolase I family. QueF type 1 subfamily.

Its subcellular location is the cytoplasm. It catalyses the reaction 7-aminomethyl-7-carbaguanine + 2 NADP(+) = 7-cyano-7-deazaguanine + 2 NADPH + 3 H(+). It functions in the pathway tRNA modification; tRNA-queuosine biosynthesis. Functionally, catalyzes the NADPH-dependent reduction of 7-cyano-7-deazaguanine (preQ0) to 7-aminomethyl-7-deazaguanine (preQ1). The polypeptide is NADPH-dependent 7-cyano-7-deazaguanine reductase (Staphylococcus aureus (strain JH1)).